The following is an 804-amino-acid chain: Endoplasmin (804 aa).

Positions 1-21 (MRALWVLGLCCVLLTFGSVRA) are cleaved as a signal peptide. Residues 42-44 (SRT) carry the SRT pseudosubstrate motif motif. Asn-62 is a glycosylation site (N-linked (GlcNAc...) asparagine). Phosphoserine is present on Ser-64. Residue Asn-107 is glycosylated (N-linked (GlcNAc...) asparagine). 3 residues coordinate ATP: Asn-107, Asp-149, and Asn-162. Lys-168 is modified (N6-(2-hydroxyisobutyryl)lysine). Ser-172 is subject to Phosphoserine. Residue Phe-199 coordinates ATP. Asn-217 carries N-linked (GlcNAc...) asparagine glycosylation. Residues 288-323 (TVEEPMEEEEAAKEEKEESDDEAAVEEEEEEKKPKT) form a disordered region. The segment covering 289 to 317 (VEEPMEEEEAAKEEKEESDDEAAVEEEEE) has biased composition (acidic residues). Residues Ser-306 and Ser-403 each carry the phosphoserine modification. N6-succinyllysine is present on Lys-404. The N-linked (GlcNAc...) asparagine glycan is linked to Asn-445. Phosphoserine is present on Ser-447. N6-acetyllysine is present on Lys-479. 2 N-linked (GlcNAc...) asparagine glycosylation sites follow: Asn-481 and Asn-502. Lys-633 carries the N6-succinyllysine modification. Positions 750–804 (DPDAKVEEEPEEEPEETTEDTTEDTEQDEDEEMDVGTDEEEQETAKESTAEKDEL) are disordered. Positions 757-791 (EEPEEEPEETTEDTTEDTEQDEDEEMDVGTDEEEQ) are enriched in acidic residues. Thr-786 carries the post-translational modification Phosphothreonine. Basic and acidic residues predominate over residues 792 to 804 (ETAKESTAEKDEL). The short motif at 801 to 804 (KDEL) is the Prevents secretion from ER element.

This sequence belongs to the heat shock protein 90 family. As to quaternary structure, homodimer; disulfide-linked. Component of an EIF2 complex at least composed of CELF1/CUGBP1, CALR, CALR3, EIF2S1, EIF2S2, HSP90B1 and HSPA5. Part of a large chaperone multiprotein complex comprising DNAJB11, HSP90B1, HSPA5, HYOU, PDIA2, PDIA4, PDIA6, PPIB, SDF2L1, UGGT1 and very small amounts of ERP29, but not, or at very low levels, CALR nor CANX. Interacts with AIMP1; regulates its retention in the endoplasmic reticulum. Hyperglycosylated form interacts with OS9; promoting its degradation by the endoplasmic reticulum associated degradation (ERAD). Interacts with CNPY3. This interaction is disrupted in the presence of ATP. Interacts with TLR4 and TLR9, but not with TLR3. Interacts with MZB1 in a calcium-dependent manner. Interacts with METTL23. Interacts with IL1B; the interaction facilitates cargo translocation into the ERGIC. Interacts with EIF2AK3. Phosphorylated by CK2. In terms of processing, N-glycosylated cotranslationally at Asn-217 by STT3A-containing OST-A complex: this glycosylation is constitutive. In response to various stress, 5 additional facultative sites (Asn-62, Asn-107, Asn-445, Asn-481 and Asn-502) can be glycosylated post-translationally by STT3B-containing OST-B complex, leading to a hyperglycosylated form that is degraded by the ER-associated degradation (ERAD) pathway. In normal conditions, the OST-A complex together with CCDC134 prevent glycosylation at facultative sites during protein folding, thereby preventing hyperglycosylation. Mechanistically, nascent HSP90B1 is tethered during translation to a specialized CCDC134-containing translocon that forms a microenvironment for its folding, in which STT3A associates with the SRT pseudosubstrate motif, and prevents access to facultative glycosylation sites until folding is completed, rendering its facultative sites inaccessible to the OST-B complex.

It localises to the endoplasmic reticulum lumen. The protein resides in the sarcoplasmic reticulum lumen. It is found in the melanosome. The enzyme catalyses ATP + H2O = ADP + phosphate + H(+). Functionally, ATP-dependent chaperone involved in the processing of proteins in the endoplasmic reticulum, regulating their transport. Together with MESD, acts as a modulator of the Wnt pathway by promoting the folding of LRP6, a coreceptor of the canonical Wnt pathway. When associated with CNPY3, required for proper folding of Toll-like receptors. Promotes folding and trafficking of TLR4 to the cell surface. May participate in the unfolding of cytosolic leaderless cargos (lacking the secretion signal sequence) such as the interleukin 1/IL-1 to facilitate their translocation into the ERGIC (endoplasmic reticulum-Golgi intermediate compartment) and secretion; the translocation process is mediated by the cargo receptor TMED10. This Pongo abelii (Sumatran orangutan) protein is Endoplasmin (HSP90B1).